The sequence spans 511 residues: Histidine ammonia-lyase (511 aa).

The 5-imidazolinone (Ala-Gly) cross-link spans Ala-142–Gly-144. Ser-143 is subject to 2,3-didehydroalanine (Ser).

Belongs to the PAL/histidase family. In terms of processing, contains an active site 4-methylidene-imidazol-5-one (MIO), which is formed autocatalytically by cyclization and dehydration of residues Ala-Ser-Gly.

The protein localises to the cytoplasm. The enzyme catalyses L-histidine = trans-urocanate + NH4(+). It participates in amino-acid degradation; L-histidine degradation into L-glutamate; N-formimidoyl-L-glutamate from L-histidine: step 1/3. This Brucella ovis (strain ATCC 25840 / 63/290 / NCTC 10512) protein is Histidine ammonia-lyase.